A 373-amino-acid polypeptide reads, in one-letter code: Leucine aminopeptidase 1 (373 aa).

The N-terminal stretch at methionine 1–glycine 18 is a signal peptide. Residues histidine 176 and aspartate 195 each contribute to the Zn(2+) site. Asparagine 196 carries an N-linked (GlcNAc...) asparagine glycan. The Zn(2+) site is built by glutamate 234 and aspartate 261. N-linked (GlcNAc...) asparagine glycosylation is present at asparagine 286. Cysteines 310 and 314 form a disulfide. Histidine 343 contributes to the Zn(2+) binding site.

This sequence belongs to the peptidase M28 family. M28E subfamily. As to quaternary structure, monomer. Zn(2+) is required as a cofactor.

The protein localises to the secreted. In terms of biological role, extracellular aminopeptidase which contributes to pathogenicity. The polypeptide is Leucine aminopeptidase 1 (LAP1) (Arthroderma otae (strain ATCC MYA-4605 / CBS 113480) (Microsporum canis)).